A 334-amino-acid chain; its full sequence is Dual specificity mitogen-activated protein kinase kinase 6 (334 aa).

Over residues 1–11 (MSQSKGKKRNP) the composition is skewed to basic residues. The segment at 1–34 (MSQSKGKKRNPGLKIPKEAFEQPQTSSTPPRDLD) is disordered. A d domain region spans residues 4-19 (SKGKKRNPGLKIPKEA). A Protein kinase domain is found at 53-314 (LEPIMELGRG…YPELMQHPFF (262 aa)). ATP-binding positions include 59-67 (LGRGAYGVV) and Lys82. The Proton acceptor role is filled by Asp179. The residue at position 207 (Ser207) is a (Microbial infection) O-acetylserine; by Yersinia YopJ; alternate. Ser207 carries the phosphoserine; by MAP3K; alternate modification. Thr211 is subject to (Microbial infection) O-acetylthreonine; by Yersinia YopJ; alternate. Thr211 bears the Phosphothreonine; by MAP3K; alternate mark. Residues 311 to 334 (HPFFTLHESKGTDVASFVKLILGD) are DVD domain.

This sequence belongs to the protein kinase superfamily. STE Ser/Thr protein kinase family. MAP kinase kinase subfamily. As to quaternary structure, dimer. Interacts (via its D domain) with its substrates MAPK11, MAPK12, MAPK13 and MAPK14. Interacts (via its DVD domain) with MAP3Ks activators like MAP3K5/ASK1, MAP3K1/MEKK1, MAP3K2/MEKK2, MAP3K3/MEKK3, MAP3K4/MEKK4, MAP3K7/TAK1, MAP3K11/MLK3 and MAP3K17/TAOK2. Interacts with DCTN1. Interacts with EIF2AK2/PKR. (Microbial infection) Interacts with Yersinia YopJ. Weakly autophosphorylated. Phosphorylated at Ser-207 and Thr-211 by the majority of M3Ks, such as MAP3K5/ASK1, MAP3K1/MEKK1, MAP3K2/MEKK2, MAP3K3/MEKK3, MAP3K4/MEKK4, MAP3K7/TAK1, MAP3K11/MLK3 and MAP3K17/TAOK2. In terms of processing, in response to genotoxic stress, MAP3K-phosphorylated MAP2K6 is ubiquitinated and degraded by the SCF(FBXO31) complex. Post-translationally, (Microbial infection) Acetylation of Ser-207 and Thr-211 by Yersinia YopJ prevents phosphorylation and activation, thus blocking the MAPK signaling pathway. In terms of tissue distribution, isoform 2 is only expressed in skeletal muscle. Isoform 1 is expressed in skeletal muscle, heart, and in lesser extent in liver or pancreas.

Its subcellular location is the nucleus. It localises to the cytoplasm. The protein resides in the cytoskeleton. It catalyses the reaction L-seryl-[protein] + ATP = O-phospho-L-seryl-[protein] + ADP + H(+). The catalysed reaction is L-threonyl-[protein] + ATP = O-phospho-L-threonyl-[protein] + ADP + H(+). The enzyme catalyses L-tyrosyl-[protein] + ATP = O-phospho-L-tyrosyl-[protein] + ADP + H(+). Activated by dual phosphorylation on Ser-207 and Thr-211 in response to a variety of cellular stresses, including UV radiation, osmotic shock, hypoxia, inflammatory cytokines, interferon gamma (IFNG), and less often by growth factors. MAP2K6/MKK6 is activated by the majority of M3Ks, such as MAP3K5/ASK1, MAP3K1/MEKK1, MAP3K2/MEKK2, MAP3K3/MEKK3, MAP3K4/MEKK4, MAP3K7/TAK1, MAP3K11/MLK3 and MAP3K17/TAOK2. Its function is as follows. Dual specificity protein kinase which acts as an essential component of the MAP kinase signal transduction pathway. With MAP3K3/MKK3, catalyzes the concomitant phosphorylation of a threonine and a tyrosine residue in the MAP kinases p38 MAPK11, MAPK12, MAPK13 and MAPK14 and plays an important role in the regulation of cellular responses to cytokines and all kinds of stresses. Especially, MAP2K3/MKK3 and MAP2K6/MKK6 are both essential for the activation of MAPK11 and MAPK13 induced by environmental stress, whereas MAP2K6/MKK6 is the major MAPK11 activator in response to TNF. MAP2K6/MKK6 also phosphorylates and activates PAK6. The p38 MAP kinase signal transduction pathway leads to direct activation of transcription factors. Nuclear targets of p38 MAP kinase include the transcription factors ATF2 and ELK1. Within the p38 MAPK signal transduction pathway, MAP3K6/MKK6 mediates phosphorylation of STAT4 through MAPK14 activation, and is therefore required for STAT4 activation and STAT4-regulated gene expression in response to IL-12 stimulation. The pathway is also crucial for IL-6-induced SOCS3 expression and down-regulation of IL-6-mediated gene induction; and for IFNG-dependent gene transcription. Has a role in osteoclast differentiation through NF-kappa-B transactivation by TNFSF11, and in endochondral ossification and since SOX9 is another likely downstream target of the p38 MAPK pathway. MAP2K6/MKK6 mediates apoptotic cell death in thymocytes. Acts also as a regulator for melanocytes dendricity, through the modulation of Rho family GTPases. The polypeptide is Dual specificity mitogen-activated protein kinase kinase 6 (MAP2K6) (Homo sapiens (Human)).